A 292-amino-acid polypeptide reads, in one-letter code: Coiled-coil domain-containing protein 192 (292 aa).

Positions 28-55 are disordered; that stretch reads SVVPESDTSERSSMTSGSSESDIPQENK. The segment covering 38 to 49 has biased composition (low complexity); the sequence is RSSMTSGSSESD. Coiled-coil stretches lie at residues 65-174 and 222-258; these read QMAF…LATA and IMEL…AERS. Basic and acidic residues predominate over residues 251 to 267; that stretch reads QQLEAERSPHPPQEVKD. The disordered stretch occupies residues 251–292; it reads QQLEAERSPHPPQEVKDPPGCLPEAPVFSTHDIPPVVSDENL.

The polypeptide is Coiled-coil domain-containing protein 192 (Homo sapiens (Human)).